The chain runs to 426 residues: Ornithine aminotransferase (426 aa).

At Lys-291 the chain carries N6-(pyridoxal phosphate)lysine.

The protein belongs to the class-III pyridoxal-phosphate-dependent aminotransferase family. Pyridoxal 5'-phosphate is required as a cofactor.

The enzyme catalyses a 2-oxocarboxylate + L-ornithine = L-glutamate 5-semialdehyde + an L-alpha-amino acid. It functions in the pathway amino-acid biosynthesis; L-proline biosynthesis; L-glutamate 5-semialdehyde from L-ornithine: step 1/1. The sequence is that of Ornithine aminotransferase from Vigna aconitifolia (Moth bean).